The primary structure comprises 99 residues: uncharacterized protein (99 aa).

Residues 1–17 (MMMNAFFPAMALMVLVG) form the signal peptide. A lipid anchor (N-palmitoyl cysteine) is attached at cysteine 18. The S-diacylglycerol cysteine moiety is linked to residue cysteine 18.

It is found in the cell membrane. This is an uncharacterized protein from Shigella boydii serotype 4 (strain Sb227).